The following is a 271-amino-acid chain: MLPTVFIVSDGTGITAETFAHSILSQFDQKFRLVRVPFVDSLDKAYATVEKINEAAVHDGRRAIVFTTLVDSESNDIVKRSNALVLDMFQRFVEPLEQELELKSSHAMGRGHQNADTEEYKTRIEAINFSLAHDDGQSNRNLSEADVILVGVSRSGKTPTSLYLAMQYGVKAANYPLIPEDFERGKLPSALSPYSEKLFGLSIDPQRLSEIRNERRPGSKYAAPENCRYEINEAEAMMRREGIKWLSSTHKSIEEIATTILQEIRLDRQSY.

151–158 (GVSRSGKT) serves as a coordination point for ADP.

This sequence belongs to the pyruvate, phosphate/water dikinase regulatory protein family. PSRP subfamily.

The catalysed reaction is [pyruvate, water dikinase] + ADP = [pyruvate, water dikinase]-phosphate + AMP + H(+). The enzyme catalyses [pyruvate, water dikinase]-phosphate + phosphate + H(+) = [pyruvate, water dikinase] + diphosphate. Bifunctional serine/threonine kinase and phosphorylase involved in the regulation of the phosphoenolpyruvate synthase (PEPS) by catalyzing its phosphorylation/dephosphorylation. The protein is Putative phosphoenolpyruvate synthase regulatory protein of Burkholderia cenocepacia (strain ATCC BAA-245 / DSM 16553 / LMG 16656 / NCTC 13227 / J2315 / CF5610) (Burkholderia cepacia (strain J2315)).